Reading from the N-terminus, the 293-residue chain is 4-diphosphocytidyl-2-C-methyl-D-erythritol kinase (293 aa).

Residue K16 is part of the active site. 99–109 (PMGAGLGGGSS) is a binding site for ATP. D141 is a catalytic residue.

Belongs to the GHMP kinase family. IspE subfamily.

The catalysed reaction is 4-CDP-2-C-methyl-D-erythritol + ATP = 4-CDP-2-C-methyl-D-erythritol 2-phosphate + ADP + H(+). Its pathway is isoprenoid biosynthesis; isopentenyl diphosphate biosynthesis via DXP pathway; isopentenyl diphosphate from 1-deoxy-D-xylulose 5-phosphate: step 3/6. Functionally, catalyzes the phosphorylation of the position 2 hydroxy group of 4-diphosphocytidyl-2C-methyl-D-erythritol. The sequence is that of 4-diphosphocytidyl-2-C-methyl-D-erythritol kinase from Paraburkholderia xenovorans (strain LB400).